Reading from the N-terminus, the 204-residue chain is Cardiotrophin-2 (204 aa).

The signal sequence occupies residues 1-22 (MYCLLATPLCLLSLLLPPLSPA). Residue Asn-44 is glycosylated (N-linked (GlcNAc...) asparagine).

Belongs to the IL-6 superfamily. In terms of assembly, binds to tripartite CNTF receptor complex consisting of CNTF alpha chain, LIFR and IL6ST (in vitro). As to expression, not detected in adult tissues.

It localises to the secreted. Its function is as follows. Increases the platelet count associated with splenomegaly. May have an important role in neuronal precursor development and maturation. This Mus musculus (Mouse) protein is Cardiotrophin-2 (Ctf2).